Here is a 527-residue protein sequence, read N- to C-terminus: Bifunctional purine biosynthesis protein PurH (527 aa).

Residues 1-149 (MTADLLPVRR…KNFARVAVAT (149 aa)) enclose the MGS-like domain.

This sequence belongs to the PurH family.

The catalysed reaction is (6R)-10-formyltetrahydrofolate + 5-amino-1-(5-phospho-beta-D-ribosyl)imidazole-4-carboxamide = 5-formamido-1-(5-phospho-D-ribosyl)imidazole-4-carboxamide + (6S)-5,6,7,8-tetrahydrofolate. The enzyme catalyses IMP + H2O = 5-formamido-1-(5-phospho-D-ribosyl)imidazole-4-carboxamide. Its pathway is purine metabolism; IMP biosynthesis via de novo pathway; 5-formamido-1-(5-phospho-D-ribosyl)imidazole-4-carboxamide from 5-amino-1-(5-phospho-D-ribosyl)imidazole-4-carboxamide (10-formyl THF route): step 1/1. It functions in the pathway purine metabolism; IMP biosynthesis via de novo pathway; IMP from 5-formamido-1-(5-phospho-D-ribosyl)imidazole-4-carboxamide: step 1/1. This Stenotrophomonas maltophilia (strain R551-3) protein is Bifunctional purine biosynthesis protein PurH.